Reading from the N-terminus, the 283-residue chain is Thymidylate synthase (283 aa).

R22 is a binding site for dUMP. C160 (nucleophile) is an active-site residue. DUMP-binding positions include 180–183 (RSCD), N191, and 221–223 (HIY). D183 contributes to the (6R)-5,10-methylene-5,6,7,8-tetrahydrofolate binding site. Residue S282 participates in (6R)-5,10-methylene-5,6,7,8-tetrahydrofolate binding.

The protein belongs to the thymidylate synthase family. Bacterial-type ThyA subfamily. Homodimer.

Its subcellular location is the cytoplasm. It carries out the reaction dUMP + (6R)-5,10-methylene-5,6,7,8-tetrahydrofolate = 7,8-dihydrofolate + dTMP. It participates in pyrimidine metabolism; dTTP biosynthesis. Functionally, catalyzes the reductive methylation of 2'-deoxyuridine-5'-monophosphate (dUMP) to 2'-deoxythymidine-5'-monophosphate (dTMP) while utilizing 5,10-methylenetetrahydrofolate (mTHF) as the methyl donor and reductant in the reaction, yielding dihydrofolate (DHF) as a by-product. This enzymatic reaction provides an intracellular de novo source of dTMP, an essential precursor for DNA biosynthesis. The polypeptide is Thymidylate synthase (Vibrio vulnificus (strain YJ016)).